Reading from the N-terminus, the 238-residue chain is Leucyl/phenylalanyl-tRNA--protein transferase (238 aa).

The protein belongs to the L/F-transferase family.

Its subcellular location is the cytoplasm. The enzyme catalyses N-terminal L-lysyl-[protein] + L-leucyl-tRNA(Leu) = N-terminal L-leucyl-L-lysyl-[protein] + tRNA(Leu) + H(+). The catalysed reaction is N-terminal L-arginyl-[protein] + L-leucyl-tRNA(Leu) = N-terminal L-leucyl-L-arginyl-[protein] + tRNA(Leu) + H(+). It carries out the reaction L-phenylalanyl-tRNA(Phe) + an N-terminal L-alpha-aminoacyl-[protein] = an N-terminal L-phenylalanyl-L-alpha-aminoacyl-[protein] + tRNA(Phe). Functions in the N-end rule pathway of protein degradation where it conjugates Leu, Phe and, less efficiently, Met from aminoacyl-tRNAs to the N-termini of proteins containing an N-terminal arginine or lysine. The protein is Leucyl/phenylalanyl-tRNA--protein transferase of Psychromonas ingrahamii (strain DSM 17664 / CCUG 51855 / 37).